Consider the following 571-residue polypeptide: Coenzyme A biosynthesis protein 3 (571 aa).

Disordered regions lie at residues 1–72 (MTDE…YKND) and 100–120 (INTS…PSLP). A compositionally biased stretch (polar residues) spans 8 to 35 (SDQNMNGKQGVNLISSLPTTQVPVSILT). The residue at position 42 (Ser42) is a Phosphoserine. The span at 43-59 (IHDESNFERSDSHEDQS) shows a compositional bias: basic and acidic residues. Over residues 60-72 (KSNSNRRNIYKND) the composition is skewed to polar residues. Phosphoserine is present on residues Ser116, Ser121, and Ser124. Disordered regions lie at residues 140–171 (ISNK…LQEQ) and 209–244 (IFKE…SMEK). A compositionally biased stretch (low complexity) spans 146–171 (KQQQQQEQLQQNQQQEEQQKAQLQEQ). Phosphoserine is present on Ser264. The tract at residues 507 to 571 (RDEETGDKEQ…EDEEDVKTEV (65 aa)) is disordered. The span at 516-571 (QEQEEQEGADNEDDDDEDDEEDEEDEEEEEALNETASDESNDEEDEEDEEDVKTEV) shows a compositional bias: acidic residues.

Belongs to the HFCD (homooligomeric flavin containing Cys decarboxylase) superfamily. In terms of assembly, component of the phosphopantothenoylcysteine decarboxylase (PPCDC) complex, a heterotrimer composed of CAB3, HAL3 and VHS3.

The protein resides in the cytoplasm. Its function is as follows. Component of the phosphopantothenoylcysteine decarboxylase (PPCDC) involved in the coenzyme A synthesis. This Saccharomyces cerevisiae (strain ATCC 204508 / S288c) (Baker's yeast) protein is Coenzyme A biosynthesis protein 3 (CAB3).